The following is a 309-amino-acid chain: tRNA dimethylallyltransferase (309 aa).

9–16 contacts ATP; sequence GPTAVGKT. 11 to 16 lines the substrate pocket; the sequence is TAVGKT. The segment at 34–37 is interaction with substrate tRNA; it reads DSMQ.

This sequence belongs to the IPP transferase family. As to quaternary structure, monomer. It depends on Mg(2+) as a cofactor.

The catalysed reaction is adenosine(37) in tRNA + dimethylallyl diphosphate = N(6)-dimethylallyladenosine(37) in tRNA + diphosphate. Its function is as follows. Catalyzes the transfer of a dimethylallyl group onto the adenine at position 37 in tRNAs that read codons beginning with uridine, leading to the formation of N6-(dimethylallyl)adenosine (i(6)A). In Clostridium kluyveri (strain NBRC 12016), this protein is tRNA dimethylallyltransferase.